A 485-amino-acid polypeptide reads, in one-letter code: Glutamyl-tRNA(Gln) amidotransferase subunit A (485 aa).

Active-site charge relay system residues include lysine 78 and serine 153. Residue serine 177 is the Acyl-ester intermediate of the active site.

Belongs to the amidase family. GatA subfamily. As to quaternary structure, heterotrimer of A, B and C subunits.

The catalysed reaction is L-glutamyl-tRNA(Gln) + L-glutamine + ATP + H2O = L-glutaminyl-tRNA(Gln) + L-glutamate + ADP + phosphate + H(+). Allows the formation of correctly charged Gln-tRNA(Gln) through the transamidation of misacylated Glu-tRNA(Gln) in organisms which lack glutaminyl-tRNA synthetase. The reaction takes place in the presence of glutamine and ATP through an activated gamma-phospho-Glu-tRNA(Gln). The protein is Glutamyl-tRNA(Gln) amidotransferase subunit A of Bacillus cereus (strain AH820).